Consider the following 299-residue polypeptide: Acetylglutamate kinase (299 aa).

Residues 70–71, Arg-92, and Asn-186 each bind substrate; that span reads GG.

Belongs to the acetylglutamate kinase family. ArgB subfamily.

The protein resides in the cytoplasm. It catalyses the reaction N-acetyl-L-glutamate + ATP = N-acetyl-L-glutamyl 5-phosphate + ADP. It participates in amino-acid biosynthesis; L-arginine biosynthesis; N(2)-acetyl-L-ornithine from L-glutamate: step 2/4. In terms of biological role, catalyzes the ATP-dependent phosphorylation of N-acetyl-L-glutamate. This chain is Acetylglutamate kinase, found in Thermoanaerobacter pseudethanolicus (strain ATCC 33223 / 39E) (Clostridium thermohydrosulfuricum).